Reading from the N-terminus, the 138-residue chain is MDNLDKLIRECGVELYDSEIANENGRAIFRVYITKDGGVSLDDCEKVSRLLSPIFDVTPPVSGDYNLEVSSPGLERKLSKPSHFKASVGELVKVQTEAEKFAGRLVKADEESIAVENEEGIFEINISEIKKAKTYLEW.

The protein belongs to the RimP family.

It localises to the cytoplasm. Required for maturation of 30S ribosomal subunits. The polypeptide is Ribosome maturation factor RimP (Campylobacter concisus (strain 13826)).